The primary structure comprises 650 residues: Acetyl-coenzyme A synthetase (650 aa).

CoA-binding positions include 191 to 194 (RGGR), Thr-311, and Asn-335. Residues 387–389 (GEP), 411–416 (DTWWQT), Asp-501, and Arg-516 contribute to the ATP site. Residue Ser-524 coordinates CoA. Arg-527 is an ATP binding site. Mg(2+) is bound by residues Val-538, His-540, and Ile-543. Arg-585 is a CoA binding site. Position 610 is an N6-acetyllysine (Lys-610).

This sequence belongs to the ATP-dependent AMP-binding enzyme family. It depends on Mg(2+) as a cofactor. Acetylated. Deacetylation by the SIR2-homolog deacetylase activates the enzyme.

The enzyme catalyses acetate + ATP + CoA = acetyl-CoA + AMP + diphosphate. In terms of biological role, catalyzes the conversion of acetate into acetyl-CoA (AcCoA), an essential intermediate at the junction of anabolic and catabolic pathways. AcsA undergoes a two-step reaction. In the first half reaction, AcsA combines acetate with ATP to form acetyl-adenylate (AcAMP) intermediate. In the second half reaction, it can then transfer the acetyl group from AcAMP to the sulfhydryl group of CoA, forming the product AcCoA. The sequence is that of Acetyl-coenzyme A synthetase from Vibrio vulnificus (strain CMCP6).